Here is a 498-residue protein sequence, read N- to C-terminus: UDP-N-acetylmuramoylalanine--D-glutamate ligase (498 aa).

119-125 (GTNGKST) contacts ATP.

Belongs to the MurCDEF family.

The protein resides in the cytoplasm. It catalyses the reaction UDP-N-acetyl-alpha-D-muramoyl-L-alanine + D-glutamate + ATP = UDP-N-acetyl-alpha-D-muramoyl-L-alanyl-D-glutamate + ADP + phosphate + H(+). The protein operates within cell wall biogenesis; peptidoglycan biosynthesis. Cell wall formation. Catalyzes the addition of glutamate to the nucleotide precursor UDP-N-acetylmuramoyl-L-alanine (UMA). This is UDP-N-acetylmuramoylalanine--D-glutamate ligase from Wolbachia sp. subsp. Brugia malayi (strain TRS).